We begin with the raw amino-acid sequence, 306 residues long: MLPYIVLVLGCWSVLSQAAQTDDEERAGNRRPIWIMGHMVNAIGQIDEFVNLGANSIETDVSFDDNANPEYTYHGIPCDCGRNCKKYENFNDFLKGLRSATTPGNSKYQEKLVLVVFDLKTGSLYDNQANDAGKKLAKNLLQHYWNNGNNGGRAYIVLSIPDLNHYPLIKGFKDQLTKDGHPELMEKVGHDFSGNDDIGDVGKAYKKAGITGHIWQSDGITNCLPRGLSRVNAAVANRDSANGFINKVYYWTVDKRSTTRDALDAGVDGIMTNYPDVITDVLNEAAYKKKFRVATYDDNPWVTFKK.

An N-terminal signal peptide occupies residues Met-1–Ala-18. The propeptide occupies Ala-19–Arg-26. His-38 is a catalytic residue. Mg(2+) contacts are provided by Glu-58 and Asp-60. His-74 functions as the Nucleophile in the catalytic mechanism. Disulfide bonds link Cys-78/Cys-84 and Cys-80/Cys-223. Asp-118 is a binding site for Mg(2+).

The protein belongs to the arthropod phospholipase D family. Class II subfamily. Class IIa sub-subfamily. The cofactor is Mg(2+). As to expression, expressed by the venom gland.

The protein resides in the secreted. It carries out the reaction an N-(acyl)-sphingosylphosphocholine = an N-(acyl)-sphingosyl-1,3-cyclic phosphate + choline. The catalysed reaction is an N-(acyl)-sphingosylphosphoethanolamine = an N-(acyl)-sphingosyl-1,3-cyclic phosphate + ethanolamine. The enzyme catalyses a 1-acyl-sn-glycero-3-phosphocholine = a 1-acyl-sn-glycero-2,3-cyclic phosphate + choline. It catalyses the reaction a 1-acyl-sn-glycero-3-phosphoethanolamine = a 1-acyl-sn-glycero-2,3-cyclic phosphate + ethanolamine. In terms of biological role, dermonecrotic toxins cleave the phosphodiester linkage between the phosphate and headgroup of certain phospholipids (sphingolipid and lysolipid substrates), forming an alcohol (often choline) and a cyclic phosphate. This toxin acts on sphingomyelin (SM). The level of enzymatic activity is high according to Tambourgi and colleagues or low according to Felicori and colleagues. It may also act on ceramide phosphoethanolamine (CPE), lysophosphatidylcholine (LPC) and lysophosphatidylethanolamine (LPE), but not on lysophosphatidylserine (LPS), and lysophosphatidylglycerol (LPG). It acts by transphosphatidylation, releasing exclusively cyclic phosphate products as second products. It induces complement-dependent hemolysis, dermonecrosis, vascular permeability and platelet aggregation. Both C5a and the membrane attack complex may play a role in the induction of dermonecrosis. MMP-9 and MMP-2 produced by skin fibroblasts can also contribute to proteolytic tissue destruction. The polypeptide is Dermonecrotic toxin LiSicTox-alphaIA1bi (Loxosceles intermedia (Brown spider)).